Here is a 511-residue protein sequence, read N- to C-terminus: Lysine--tRNA ligase (511 aa).

Residues glutamate 421 and glutamate 428 each contribute to the Mg(2+) site.

It belongs to the class-II aminoacyl-tRNA synthetase family. Homodimer. The cofactor is Mg(2+).

The protein resides in the cytoplasm. It catalyses the reaction tRNA(Lys) + L-lysine + ATP = L-lysyl-tRNA(Lys) + AMP + diphosphate. This chain is Lysine--tRNA ligase, found in Herminiimonas arsenicoxydans.